Here is a 115-residue protein sequence, read N- to C-terminus: Large ribosomal subunit protein bL19 (115 aa).

The protein belongs to the bacterial ribosomal protein bL19 family.

This protein is located at the 30S-50S ribosomal subunit interface and may play a role in the structure and function of the aminoacyl-tRNA binding site. The chain is Large ribosomal subunit protein bL19 from Leifsonia xyli subsp. xyli (strain CTCB07).